The sequence spans 279 residues: Secreted RxLR effector protein 152 (279 aa).

An N-terminal signal peptide occupies residues 1 to 22; sequence MRNGSVLFGLFFIGHSCSVLLA. The RxLR-dEER motif lies at 47 to 62; it reads RTLQADDSERTLAEER.

The protein belongs to the RxLR effector family.

It is found in the secreted. The protein resides in the host nucleus. Functionally, secreted effector that completely suppresses the host cell death induced by cell death-inducing proteins. This chain is Secreted RxLR effector protein 152, found in Plasmopara viticola (Downy mildew of grapevine).